The primary structure comprises 302 residues: Heme A synthase (302 aa).

Residues 1–8 are Cytoplasmic-facing; sequence MFRKQNLK. The helical transmembrane segment at 9 to 29 threads the bilayer; sequence WLGVLATIIMTFVQLGGALVT. Topologically, residues 30 to 67 are extracellular; the sequence is KTGSEDGCGSSWPLCNGALLPENLPIQTIIELSHRAVS. Cys-37 and Cys-44 form a disulfide bridge. Residue Glu-60 is part of the active site. His-63 contacts heme o. The chain crosses the membrane as a helical span at residues 68–88; that stretch reads AISLIVVLWLVITAWKNIGYI. Residues 89–93 are Cytoplasmic-facing; it reads KEIKP. A helical transmembrane segment spans residues 94 to 114; it reads LSIISVGFLLVQALVGAAAVI. At 115 to 125 the chain is on the extracellular side; that stretch reads WQQNPYVLALH. His-125 contacts heme o. A helical membrane pass occupies residues 126 to 146; sequence FGISLISFSSVFLMTLIIFSI. Topologically, residues 147-161 are cytoplasmic; that stretch reads DKKYEADILFIHKPL. A helical transmembrane segment spans residues 162–182; the sequence is RILTWLMAIIVYLTIYTGALV. The Extracellular segment spans residues 183–215; sequence RHTKSSLAYGAWPIPFDDIVPHNAHDWVQFSHR. Residue His-214 participates in heme b binding. Residues 216–236 form a helical membrane-spanning segment; that stretch reads GMALITFIWIMITFIHAIKNY. At 237 to 244 the chain is on the cytoplasmic side; it reads SDNRTVRY. Residues 245-265 traverse the membrane as a helical segment; it reads GYTASFILVILQVITGALSVI. Over 266 to 270 the chain is Extracellular; the sequence is TNVNL. The helical transmembrane segment at 271 to 291 threads the bilayer; it reads IIALFHALFITYLFGMIAYFI. His-276 contributes to the heme b binding site. Residues 292-302 are Cytoplasmic-facing; that stretch reads LLMLRTTRSQK.

The protein belongs to the COX15/CtaA family. Type 1 subfamily. As to quaternary structure, interacts with CtaB. The cofactor is heme b.

The protein resides in the cell membrane. The catalysed reaction is Fe(II)-heme o + 2 A + H2O = Fe(II)-heme a + 2 AH2. The protein operates within porphyrin-containing compound metabolism; heme A biosynthesis; heme A from heme O: step 1/1. Its function is as follows. Catalyzes the conversion of heme O to heme A by two successive hydroxylations of the methyl group at C8. The first hydroxylation forms heme I, the second hydroxylation results in an unstable dihydroxymethyl group, which spontaneously dehydrates, resulting in the formyl group of heme A. This is Heme A synthase from Staphylococcus epidermidis (strain ATCC 35984 / DSM 28319 / BCRC 17069 / CCUG 31568 / BM 3577 / RP62A).